The following is a 499-amino-acid chain: Cytochrome P450 76T24 (499 aa).

Residues 3–23 form a helical membrane-spanning segment; it reads VDILLSLVLAFFGWAAIYFLT. 4 N-linked (GlcNAc...) asparagine glycosylation sites follow: asparagine 55, asparagine 76, asparagine 279, and asparagine 284. A heme-binding site is contributed by cysteine 442.

The protein belongs to the cytochrome P450 family.

Its subcellular location is the membrane. This is Cytochrome P450 76T24 from Catharanthus roseus (Madagascar periwinkle).